A 234-amino-acid polypeptide reads, in one-letter code: Thrombin-like enzyme ancrod (234 aa).

The 227-residue stretch at 1–227 folds into the Peptidase S1 domain; the sequence is VIGGDECNIN…YRDWVNNVIA (227 aa). Intrachain disulfides connect C7/C141, C28/C44, C78/C232, C120/C188, C152/C167, and C178/C203. N23 carries an N-linked (GlcNAc...) asparagine glycan. The active-site Charge relay system is H43. Residue N79 is glycosylated (N-linked (GlcNAc...) asparagine). Catalysis depends on D88, which acts as the Charge relay system. N99 and N148 each carry an N-linked (GlcNAc...) asparagine glycan. S182 functions as the Charge relay system in the catalytic mechanism. N229 carries an N-linked (GlcNAc...) asparagine glycan.

The protein belongs to the peptidase S1 family. Snake venom subfamily. As to quaternary structure, monomer. Expressed by the venom gland.

The protein localises to the secreted. The catalysed reaction is Selective cleavage of Arg-|-Xaa bond in fibrinogen, to form fibrin, and release fibrinopeptide A. The specificity of further degradation of fibrinogen varies with species origin of the enzyme.. In terms of biological role, thrombin-like snake venom serine protease that acts as an anticoagulant. It cleaves fibrinogen (FGA) to split off the A-fibrinopeptides (A, AY and AP), but not the B-fibrinopeptide. The resulting fibrin polymers are imperfectly formed and much smaller in size (1 to 2 um long) than the fibrin polymers produced by the action of thrombin. These ancrod-induced microthrombi are friable, unstable, urea-soluble and have significantly degraded alpha chains. They do not cross-link to form thrombi. They are markedly susceptible to digestion by plasmin and are rapidly removed from circulation by either reticuloendothelial phagocytosis or normal fibrinolysis, or both. Anticoagulation through the removal of fibrinogen from the blood is rapid, occurring within hours following its administration. It does not activate plasminogen and does not degrade preformed, fully cross-linked thrombin fibrin. It also reduces the level of plasminogen activator inhibitor (PAI) and may stimulate the release of tissue plasminogen activator (PLAT) from the endothelium. The profibrinolytic effect of these 2 actions appears to be limited to local microthrombus degradation. The protein is Thrombin-like enzyme ancrod of Calloselasma rhodostoma (Malayan pit viper).